The sequence spans 156 residues: Small ribosomal subunit protein uS7 (156 aa).

Belongs to the universal ribosomal protein uS7 family. As to quaternary structure, part of the 30S ribosomal subunit. Contacts proteins S9 and S11.

Functionally, one of the primary rRNA binding proteins, it binds directly to 16S rRNA where it nucleates assembly of the head domain of the 30S subunit. Is located at the subunit interface close to the decoding center, probably blocks exit of the E-site tRNA. This Brucella abortus (strain S19) protein is Small ribosomal subunit protein uS7.